The sequence spans 413 residues: Aspartate kinase (413 aa).

ACT domains lie at 267-341 (LTIR…GDTK) and 347-413 (IVGV…RQGE).

It belongs to the aspartokinase family. As to quaternary structure, homotrimer. In the presence of inhibitory amino acids the Stokes radius of the protein increases, suggesting its oligomeric state may change.

Its subcellular location is the cytoplasm. It catalyses the reaction L-aspartate + ATP = 4-phospho-L-aspartate + ADP. It functions in the pathway amino-acid biosynthesis; L-lysine biosynthesis via DAP pathway; (S)-tetrahydrodipicolinate from L-aspartate: step 1/4. It participates in amino-acid biosynthesis; L-methionine biosynthesis via de novo pathway; L-homoserine from L-aspartate: step 1/3. The protein operates within amino-acid biosynthesis; L-threonine biosynthesis; L-threonine from L-aspartate: step 1/5. With respect to regulation, activated by L-lysine, L-methionine, and L-isoleucine. L-threonine, at low concentrations, is a mild activator and has a weak inhibitory effect only at concentrations over 10 mM. Strongly feedback inhibited by the concerted combination of L-lysine and L-threonine and slightly feedback inhibited by the concerted combination of L-threonine and L-methionine. Activated by the combination of L-methionine and L-lysine, L-methionine and L-isoleucine and L-lysine and L-isoleucine. Its function is as follows. Involved in the biosynthesis of L-aspartate-beta-semialdehyde which is a central intermediate in the biosynthesis of different amino acids (L-lysine, L-methionine, L-threonine). Catalyzes the phosphorylation of the beta-carboxyl group of L-aspartate to yield 4-phospho-L-aspartate. The protein is Aspartate kinase of Pseudomonas fluorescens (strain SBW25).